A 118-amino-acid chain; its full sequence is MARIAGINIPDQKHSVIALTAIYGIGKTRSKAVLAEAGIAESVKISELSEEQIDLLREGVAKYTVEGDLRREVSMNIKRLMDLGCYRGIRHRRSLPLRGQRTKTNARTRKGPRKPIKR.

The interval 94–118 (SLPLRGQRTKTNARTRKGPRKPIKR) is disordered.

Belongs to the universal ribosomal protein uS13 family. As to quaternary structure, part of the 30S ribosomal subunit. Forms a loose heterodimer with protein S19. Forms two bridges to the 50S subunit in the 70S ribosome.

Located at the top of the head of the 30S subunit, it contacts several helices of the 16S rRNA. In the 70S ribosome it contacts the 23S rRNA (bridge B1a) and protein L5 of the 50S subunit (bridge B1b), connecting the 2 subunits; these bridges are implicated in subunit movement. Contacts the tRNAs in the A and P-sites. This Photobacterium profundum (strain SS9) protein is Small ribosomal subunit protein uS13.